The chain runs to 619 residues: (-)-camphene synthase, chloroplastic (619 aa).

The N-terminal 47 residues, 1–47 (MALVSVAPLVSMRRSLFSSPYELKSIDKTIPNLVMCRKRMSGTPSIR), are a transit peptide targeting the chloroplast. Asp-370, Asp-374, and Asp-522 together coordinate Mg(2+). The DDXXD motif signature appears at 370 to 374 (DDIYD).

Belongs to the terpene synthase family. Tpsd subfamily. Mg(2+) is required as a cofactor. The cofactor is Mn(2+).

It is found in the plastid. The protein localises to the chloroplast. The catalysed reaction is (2E)-geranyl diphosphate = (1S,4R)-camphene + diphosphate. It catalyses the reaction (2E)-geranyl diphosphate = (1R,5R)-alpha-pinene + diphosphate. The enzyme catalyses (2E)-geranyl diphosphate = tricyclene + diphosphate. It carries out the reaction (2E)-geranyl diphosphate = beta-myrcene + diphosphate. The catalysed reaction is (2E)-geranyl diphosphate = (1S,5S)-beta-pinene + diphosphate. It catalyses the reaction (2E)-geranyl diphosphate = (1S,5S)-alpha-pinene + diphosphate. The protein operates within terpene metabolism; oleoresin biosynthesis. It functions in the pathway secondary metabolite biosynthesis; terpenoid biosynthesis. Monoterpene synthase (TPS) involved in the biosynthesis of monoterpene natural products included in conifer oleoresin secretions and volatile emissions; these compounds contribute to biotic and abiotic stress defense against herbivores and pathogens. Catalyzes the conversion of (2E)-geranyl diphosphate (GPP) to (-)-camphene, (+)-alpha-pinene and (-)-alpha-pinene, and, to a lower extent, to tricyclene, myrcene and (-)-beta-pinene. In Pinus contorta (Shore pine), this protein is (-)-camphene synthase, chloroplastic.